Here is a 162-residue protein sequence, read N- to C-terminus: Crossover junction endodeoxyribonuclease RuvC (162 aa).

Catalysis depends on residues aspartate 7, glutamate 67, and aspartate 140. Mg(2+) contacts are provided by aspartate 7, glutamate 67, and aspartate 140.

The protein belongs to the RuvC family. In terms of assembly, homodimer which binds Holliday junction (HJ) DNA. The HJ becomes 2-fold symmetrical on binding to RuvC with unstacked arms; it has a different conformation from HJ DNA in complex with RuvA. In the full resolvosome a probable DNA-RuvA(4)-RuvB(12)-RuvC(2) complex forms which resolves the HJ. Requires Mg(2+) as cofactor.

The protein localises to the cytoplasm. It catalyses the reaction Endonucleolytic cleavage at a junction such as a reciprocal single-stranded crossover between two homologous DNA duplexes (Holliday junction).. Functionally, the RuvA-RuvB-RuvC complex processes Holliday junction (HJ) DNA during genetic recombination and DNA repair. Endonuclease that resolves HJ intermediates. Cleaves cruciform DNA by making single-stranded nicks across the HJ at symmetrical positions within the homologous arms, yielding a 5'-phosphate and a 3'-hydroxyl group; requires a central core of homology in the junction. The consensus cleavage sequence is 5'-(A/T)TT(C/G)-3'. Cleavage occurs on the 3'-side of the TT dinucleotide at the point of strand exchange. HJ branch migration catalyzed by RuvA-RuvB allows RuvC to scan DNA until it finds its consensus sequence, where it cleaves and resolves the cruciform DNA. This is Crossover junction endodeoxyribonuclease RuvC from Heliobacterium modesticaldum (strain ATCC 51547 / Ice1).